The chain runs to 474 residues: Cobyric acid synthase (474 aa).

In terms of domain architecture, GATase cobBQ-type spans 251 to 431 (TGFVAIPRLP…LHGLLENSAY (181 aa)). C328 serves as the catalytic Nucleophile. H423 is a catalytic residue.

Belongs to the CobB/CobQ family. CobQ subfamily.

The protein operates within cofactor biosynthesis; adenosylcobalamin biosynthesis. Catalyzes amidations at positions B, D, E, and G on adenosylcobyrinic A,C-diamide. NH(2) groups are provided by glutamine, and one molecule of ATP is hydrogenolyzed for each amidation. The sequence is that of Cobyric acid synthase from Deinococcus radiodurans (strain ATCC 13939 / DSM 20539 / JCM 16871 / CCUG 27074 / LMG 4051 / NBRC 15346 / NCIMB 9279 / VKM B-1422 / R1).